The primary structure comprises 364 residues: MSGNSIGQNFVVTTFGESHGVALGCIIDGCPPGLELTVEDMQHDLDRRRPGTSRYTTARREADEVRILSGVFEGKTTGTSIGLLIENTDQRSQDYSDIKDTFRPGHADYTYQQKYGMRDYRGGGRSSARETAMRVAAGAVAKKYLKQVHGIEIHGYLAQLGPISADTIDLTQIEQNAFFFPDASKLEALDEYMRGLRKSGDSIGAKITVAATGVPVGLGEPVFDRLDADIAHALMGINAVKGVEIGDGFGVVTQKGSQGRDLMSPQGFASNHAGGVLGGISSGQPVVAHIALKPTSSISVPGQSMTVQGETIDMITKGRHDPCVGIRAVPIAEAMLAIVLMDHLLRHRAQNQDVTSQTPVIGMR.

NADP(+) contacts are provided by Arg48 and Arg54. Residues 125 to 127 (RSS), 238 to 239 (NA), Gly278, 293 to 297 (KPTSS), and Arg319 contribute to the FMN site.

The protein belongs to the chorismate synthase family. Homotetramer. The cofactor is FMNH2.

It catalyses the reaction 5-O-(1-carboxyvinyl)-3-phosphoshikimate = chorismate + phosphate. Its pathway is metabolic intermediate biosynthesis; chorismate biosynthesis; chorismate from D-erythrose 4-phosphate and phosphoenolpyruvate: step 7/7. Catalyzes the anti-1,4-elimination of the C-3 phosphate and the C-6 proR hydrogen from 5-enolpyruvylshikimate-3-phosphate (EPSP) to yield chorismate, which is the branch point compound that serves as the starting substrate for the three terminal pathways of aromatic amino acid biosynthesis. This reaction introduces a second double bond into the aromatic ring system. In Shewanella frigidimarina (strain NCIMB 400), this protein is Chorismate synthase.